Reading from the N-terminus, the 320-residue chain is Myoblast determination protein 1 (320 aa).

Met-1 is covalently cross-linked (Peptide (Met-Gly) (interchain with G-Cter in ubiquitin)). The residue at position 104 (Lys-104) is an N6-methyllysine; by EHMT2. The 52-residue stretch at 109–160 (DRRKAATMRERRRLSKVNEAFETLKRCTSSNPNQRLPKVEILRNAIRYIEGL) folds into the bHLH domain. 2 disordered regions span residues 174 to 219 (AAAA…PPSG) and 262 to 320 (ESPA…YQVL). Polar residues-rich tracts occupy residues 197 to 207 (SDASSPRSNCS) and 291 to 301 (GESSGDPTQSP).

As to quaternary structure, efficient DNA binding requires dimerization with another bHLH protein. Seems to form active heterodimers with ITF-2. Interacts with SUV39H1. Interacts with DDX5. Interacts with CHD2. Interacts with TSC22D3. Interacts with SETD3. Interacts with P-TEFB complex; promotes the transcriptional activity of MYOD1 through its CDK9-mediated phosphorylation. Interacts with CSRP3. Interacts with NUPR1. In terms of processing, phosphorylated by CDK9. This phosphorylation promotes its function in muscle differentiation. Post-translationally, acetylated by a complex containing EP300 and PCAF. The acetylation is essential to activate target genes. Conversely, its deacetylation by SIRT1 inhibits its function. Ubiquitinated on the N-terminus; which is required for proteasomal degradation. In terms of processing, methylation at Lys-104 by EHMT2/G9a inhibits myogenic activity.

Its subcellular location is the nucleus. In terms of biological role, acts as a transcriptional activator that promotes transcription of muscle-specific target genes and plays a role in muscle differentiation. Together with MYF5 and MYOG, co-occupies muscle-specific gene promoter core region during myogenesis. Induces fibroblasts to differentiate into myoblasts. Interacts with and is inhibited by the twist protein. This interaction probably involves the basic domains of both proteins. In Homo sapiens (Human), this protein is Myoblast determination protein 1 (MYOD1).